The chain runs to 146 residues: Anti-sigma F factor (146 aa).

Belongs to the anti-sigma-factor family.

The catalysed reaction is L-seryl-[protein] + ATP = O-phospho-L-seryl-[protein] + ADP + H(+). It carries out the reaction L-threonyl-[protein] + ATP = O-phospho-L-threonyl-[protein] + ADP + H(+). In terms of biological role, binds to sigma F and blocks its ability to form an RNA polymerase holoenzyme (E-sigma F). Phosphorylates SpoIIAA on a serine residue. This phosphorylation may enable SpoIIAA to act as an anti-anti-sigma factor that counteracts SpoIIAB and thus releases sigma F from inhibition. This chain is Anti-sigma F factor, found in Oceanobacillus iheyensis (strain DSM 14371 / CIP 107618 / JCM 11309 / KCTC 3954 / HTE831).